A 373-amino-acid chain; its full sequence is MSDNSKTRVVVGMSGGVDSSVTALLLKEQGYDVIGIFMKNWDDTDENGVCTATEDYKDVVAVADQIGIPYYSVNFEKEYWDRVFEYXXAEYRAGRTPNPDVMCNKEIKFKAFLDYAMTLGADYVATGHYARVARDEDGTVHMLRGVDNGKDQTYFLSQLSQEQLQKTMFPLGHLEKPEVRKLAEEAGLSTAKKKDSTGICFIGEKNFKNFLSNYLPAQPGRMMTVDGRDMGEHAGLMYYTIGQRGGLGIGGQHGGDNAPWFVVGKDLSKNILYVGQGFYHDSLMSTSLEASQVHFTREMPEEFTLECTAKFRYRQPDSKVTVHVKGDKAEVIFAEPQRAITPGQAVVFYDGEECLGGGLIDNAYRDGQVCQYI.

Residues 12–19 and methionine 38 contribute to the ATP site; that span reads GMSGGVDS. The interaction with target base in tRNA stretch occupies residues 98 to 100; sequence NPD. Cysteine 103 acts as the Nucleophile in catalysis. A disulfide bond links cysteine 103 and cysteine 200. Glycine 127 is a binding site for ATP. Positions 150–152 are interaction with tRNA; that stretch reads KDQ. Residue cysteine 200 is the Cysteine persulfide intermediate of the active site. Positions 312–313 are interaction with tRNA; sequence RY.

This sequence belongs to the MnmA/TRMU family.

It localises to the cytoplasm. The catalysed reaction is S-sulfanyl-L-cysteinyl-[protein] + uridine(34) in tRNA + AH2 + ATP = 2-thiouridine(34) in tRNA + L-cysteinyl-[protein] + A + AMP + diphosphate + H(+). Functionally, catalyzes the 2-thiolation of uridine at the wobble position (U34) of tRNA, leading to the formation of s(2)U34. This Streptococcus pneumoniae serotype 19F (strain G54) protein is tRNA-specific 2-thiouridylase MnmA.